The chain runs to 671 residues: Spartin (671 aa).

Met-1 is modified (N-acetylmethionine). Residues 16-94 (IKEAYEKAFM…LQNVRTRLEI (79 aa)) form the MIT domain. The interval 110–175 (VPKLYPEFPP…CPAEAPPAYS (66 aa)) is disordered. The span at 118 to 128 (PPKDACKKSPE) shows a compositional bias: basic and acidic residues. Ser-126 carries the phosphoserine modification. Low complexity predominate over residues 143–158 (GSASAACAGPSGAPSA). The segment covering 159–174 (LPVPSPSCPAEAPPAY) has biased composition (pro residues). Positions 190–385 (DSGEFSSVGE…SIDQGSKDAR (196 aa)) are ubiquitin-binding region (UBR) domain. Positions 193 to 200 (EFSSVGED) match the LC3-interacting region (LIR); mediates interaction with MAP1LC3A AND MAP1LC3C motif. The segment at 346-421 (FQIPGRSSHP…SSEEKSKELP (76 aa)) is disordered. Residue Lys-360 forms a Glycyl lysine isopeptide (Lys-Gly) (interchain with G-Cter in ubiquitin) linkage. Positions 369-379 (QSSSSGSSIDQ) are enriched in low complexity. Residues 384–393 (ARHKGKRGKK) show a composition bias toward basic residues. Residues 431–615 (ILSGASWVSW…YNIDNIGIKA (185 aa)) enclose the Senescence domain. The required for localization to lipid droplets stretch occupies residues 435–507 (ASWVSWGLVK…LVDGVCTVAN (73 aa)). Ser-474 is subject to Phosphoserine. The disordered stretch occupies residues 635–671 (VERPQRESQGGATSTEGRRDIGKQVEEEKPGAGKKDK). Over residues 650–671 (EGRRDIGKQVEEEKPGAGKKDK) the composition is skewed to basic and acidic residues.

Interacts with ITCH and WWP1. Interacts (via MIT domain) with IST1; leading to the recruitment of SPART to midbodies. Interacts with MAP1LC3A and MAP1LC3C. In terms of processing, ubiquitinated; ubiquitination does not require ITCH and WWP1. In terms of tissue distribution, brain (at protein level).

Its subcellular location is the cytoplasm. The protein resides in the midbody. It is found in the lipid droplet. Functionally, lipophagy receptor that plays an important role in lipid droplet (LD) turnover in motor neurons. Localizes to LDs and interacts with components of the autophagy machinery, such as MAP1LC3A/C proteins to deliver LDs to autophagosomes for degradation via lipophagy. Lipid transfer protein required for lipid droplet degradation, including by lipophagy. Can bind and transfer all lipid species found in lipid droplets, from phospholipids to triglycerides and sterol esters but the direction of lipid transfer by spartin and its cargos are unknown. May be implicated in endosomal trafficking, or microtubule dynamics, or both. Participates in cytokinesis. This Mus musculus (Mouse) protein is Spartin.